The primary structure comprises 104 residues: NADH-quinone oxidoreductase subunit K (104 aa).

3 helical membrane-spanning segments follow: residues 4–24, 31–51, and 67–87; these read VPASAYLTLAIILFCIGLFGA, VIVLVCIELMLNAANLNFVAF, and LFTMAVAAAEAAVGLAILIAL.

Belongs to the complex I subunit 4L family. As to quaternary structure, NDH-1 is composed of 14 different subunits. Subunits NuoA, H, J, K, L, M, N constitute the membrane sector of the complex.

The protein resides in the cell membrane. The enzyme catalyses a quinone + NADH + 5 H(+)(in) = a quinol + NAD(+) + 4 H(+)(out). Its function is as follows. NDH-1 shuttles electrons from NADH, via FMN and iron-sulfur (Fe-S) centers, to quinones in the respiratory chain. The immediate electron acceptor for the enzyme in this species is believed to be a menaquinone. Couples the redox reaction to proton translocation (for every two electrons transferred, four hydrogen ions are translocated across the cytoplasmic membrane), and thus conserves the redox energy in a proton gradient. This Bacillus anthracis (strain A0248) protein is NADH-quinone oxidoreductase subunit K.